The sequence spans 493 residues: Glutamyl-tRNA(Gln) amidotransferase subunit A (493 aa).

Residues Lys-78 and Ser-158 each act as charge relay system in the active site. Ser-182 serves as the catalytic Acyl-ester intermediate.

Belongs to the amidase family. GatA subfamily. As to quaternary structure, heterotrimer of A, B and C subunits.

It catalyses the reaction L-glutamyl-tRNA(Gln) + L-glutamine + ATP + H2O = L-glutaminyl-tRNA(Gln) + L-glutamate + ADP + phosphate + H(+). Allows the formation of correctly charged Gln-tRNA(Gln) through the transamidation of misacylated Glu-tRNA(Gln) in organisms which lack glutaminyl-tRNA synthetase. The reaction takes place in the presence of glutamine and ATP through an activated gamma-phospho-Glu-tRNA(Gln). The sequence is that of Glutamyl-tRNA(Gln) amidotransferase subunit A from Rickettsia bellii (strain OSU 85-389).